The primary structure comprises 146 residues: Large ribosomal subunit protein bL9 (146 aa).

Belongs to the bacterial ribosomal protein bL9 family. Part of the 50S ribosomal subunit. Contacts protein L31.

Functionally, binds to the 23S rRNA and protein L31. The protein is Large ribosomal subunit protein bL9 (rplI) of Deinococcus radiodurans (strain ATCC 13939 / DSM 20539 / JCM 16871 / CCUG 27074 / LMG 4051 / NBRC 15346 / NCIMB 9279 / VKM B-1422 / R1).